Reading from the N-terminus, the 526-residue chain is Peptide chain release factor 3 (526 aa).

In terms of domain architecture, tr-type G spans 9 to 277; it reads DKRRTFAIIS…GIVEWAPKPQ (269 aa). GTP-binding positions include 18–25, 86–90, and 140–143; these read SHPDAGKT, DTPGH, and NKLD.

The protein belongs to the TRAFAC class translation factor GTPase superfamily. Classic translation factor GTPase family. PrfC subfamily.

It is found in the cytoplasm. Functionally, increases the formation of ribosomal termination complexes and stimulates activities of RF-1 and RF-2. It binds guanine nucleotides and has strong preference for UGA stop codons. It may interact directly with the ribosome. The stimulation of RF-1 and RF-2 is significantly reduced by GTP and GDP, but not by GMP. This chain is Peptide chain release factor 3, found in Shewanella sediminis (strain HAW-EB3).